A 540-amino-acid polypeptide reads, in one-letter code: CTP synthase (540 aa).

The interval 1-267 is amidoligase domain; the sequence is MTKYIFVTGG…DQKVCDFLHL (267 aa). Ser13 is a binding site for CTP. Ser13 contributes to the UTP binding site. Residue 14-19 coordinates ATP; sequence SLGKGI. Tyr54 is an L-glutamine binding site. Position 71 (Asp71) interacts with ATP. Residues Asp71 and Glu141 each coordinate Mg(2+). Residues 148 to 150, 188 to 193, and Lys224 contribute to the CTP site; these read DIE and KTKPTQ. UTP-binding positions include 188–193 and Lys224; that span reads KTKPTQ. Residues 294–537 form the Glutamine amidotransferase type-1 domain; sequence TITLVGKYVE…IGAASGLPAQ (244 aa). Gly356 serves as a coordination point for L-glutamine. Cys383 (nucleophile; for glutamine hydrolysis) is an active-site residue. L-glutamine contacts are provided by residues 384-387, Glu407, and Arg465; that span reads LGMQ. Active-site residues include His510 and Glu512.

Belongs to the CTP synthase family. In terms of assembly, homotetramer.

It carries out the reaction UTP + L-glutamine + ATP + H2O = CTP + L-glutamate + ADP + phosphate + 2 H(+). The catalysed reaction is L-glutamine + H2O = L-glutamate + NH4(+). The enzyme catalyses UTP + NH4(+) + ATP = CTP + ADP + phosphate + 2 H(+). It functions in the pathway pyrimidine metabolism; CTP biosynthesis via de novo pathway; CTP from UDP: step 2/2. Allosterically activated by GTP, when glutamine is the substrate; GTP has no effect on the reaction when ammonia is the substrate. The allosteric effector GTP functions by stabilizing the protein conformation that binds the tetrahedral intermediate(s) formed during glutamine hydrolysis. Inhibited by the product CTP, via allosteric rather than competitive inhibition. Its function is as follows. Catalyzes the ATP-dependent amination of UTP to CTP with either L-glutamine or ammonia as the source of nitrogen. Regulates intracellular CTP levels through interactions with the four ribonucleotide triphosphates. The sequence is that of CTP synthase from Lactobacillus johnsonii (strain CNCM I-12250 / La1 / NCC 533).